Here is a 95-residue protein sequence, read N- to C-terminus: Nickel-cobalt-cadmium resistance protein NccY (95 aa).

To A.eutrophus CnrY.

Its function is as follows. Component of the NCC cation-efflux system that confers resistance to nickel, cobalt and cadmium. May be involved in the regulation of NCC. This Alcaligenes xylosoxydans xylosoxydans (Achromobacter xylosoxidans) protein is Nickel-cobalt-cadmium resistance protein NccY (nccY).